Consider the following 191-residue polypeptide: Rho-related GTP-binding protein RhoH (191 aa).

GTP is bound at residue 11–18; sequence GDSAVGKT. The Effector region motif lies at 33–41; sequence YKPTVYENT. Residue 58–62 participates in GTP binding; sequence DTAGN. The interval 73–86 is interaction with ZAP70; it reads YQQADVVLMCYSVA. GTP is bound at residue 116-119; that stretch reads TQTD. Cys-188 is modified (cysteine methyl ester). A lipid anchor (S-geranylgeranyl cysteine) is attached at Cys-188. A propeptide spans 189–191 (removed in mature form); it reads KIL.

It belongs to the small GTPase superfamily. Rho family. As to quaternary structure, interacts with GDI1 and GDI2. Interacts with ZAP70 (via SH2 domains) and the interaction is enhanced by its phosphorylation by LCK. Interacts with SYK and the interaction is enhanced by its phosphorylation by FYN. Post-translationally, phosphorylated on tyrosine by LCK. Phosphorylated by FYN. Phosphorylation enhances the interactions with ZAP70 and SYK and is critical for its function in thymocyte development.

It is found in the cytoplasm. Its subcellular location is the cell membrane. Its function is as follows. Binds GTP but lacks intrinsic GTPase activity and is resistant to Rho-specific GTPase-activating proteins. Inhibits the activation of NF-kappa-B by TNF and IKKB and the activation of CRK/p38 by TNF. Inhibits activities of RAC1, RHOA and CDC42. Negatively regulates leukotriene production in neutrophils. Negative regulator of hematopoietic progenitor cell proliferation, survival and migration. Critical regulator of thymocyte development and T-cell antigen receptor (TCR) signaling by mediating recruitment and activation of ZAP70. Required for phosphorylation of CD3Z, membrane translocation of ZAP70 and subsequent activation of the ZAP70-mediated pathways. Essential for efficient beta-selection and positive selection by promoting the ZAP70-dependent phosphorylation of the LAT signalosome during pre-TCR and TCR signaling. Crucial for thymocyte maturation during DN3 to DN4 transition and during positive selection. Plays critical roles in mast cell function by facilitating phosphorylation of SYK in Fc epsilon RI-mediated signal transduction. Essential for the phosphorylation of LAT, LCP2, PLCG1 and PLCG2 and for Ca(2+) mobilization in mast cells. The sequence is that of Rho-related GTP-binding protein RhoH (RHOH) from Bos taurus (Bovine).